Here is a 201-residue protein sequence, read N- to C-terminus: Recombination protein RecR (201 aa).

The C4-type zinc-finger motif lies at 59–74 (CEICGNMDTENMCRIC). The region spanning 82–177 (SIIAIVETVA…KISRLASGIP (96 aa)) is the Toprim domain.

It belongs to the RecR family.

May play a role in DNA repair. It seems to be involved in an RecBC-independent recombinational process of DNA repair. It may act with RecF and RecO. The sequence is that of Recombination protein RecR from Rickettsia africae (strain ESF-5).